Consider the following 396-residue polypeptide: Cell division protein DivIB (396 aa).

Disordered stretches follow at residues 1–23 and 37–116; these read MSKD…SEWQ and EVAL…ATKE. At 1–130 the chain is on the cytoplasmic side; it reads MSKDKKNEDK…AKIPGIHILR (130 aa). Composition is skewed to basic and acidic residues over residues 37–65 and 75–116; these read EVAL…KQDQ and ESAK…ATKE. A helical membrane pass occupies residues 131-151; sequence AFTILFPSLLLLIVSAYLLSP. Residues 152–396 are Extracellular-facing; that stretch reads YATMKDIRVE…NQTNQRSSRR (245 aa). In terms of domain architecture, POTRA spans 153–223; the sequence is ATMKDIRVEG…TKFTIKVKEY (71 aa). Positions 361 to 385 are enriched in basic and acidic residues; it reads KAKQEAKEAEKKQEEEQKKQEEESN. Residues 361–396 are disordered; it reads KAKQEAKEAEKKQEEEQKKQEEESNRNQTNQRSSRR. The segment covering 386-396 has biased composition (low complexity); it reads RNQTNQRSSRR.

The protein belongs to the FtsQ/DivIB family. DivIB subfamily.

The protein resides in the cell membrane. In terms of biological role, cell division protein that may be involved in stabilizing or promoting the assembly of the division complex. In Streptococcus pneumoniae (strain ATCC BAA-255 / R6), this protein is Cell division protein DivIB.